A 706-amino-acid chain; its full sequence is Triadin (706 aa).

A disordered region spans residues 1–28 (MTEITAEGNASTTTTVIDSKNGSVPKSP). Over 1-47 (MTEITAEGNASTTTTVIDSKNGSVPKSPGKVLKRTVTEDLVTTFSSP) the chain is Cytoplasmic. The segment covering 8–24 (GNASTTTTVIDSKNGSV) has biased composition (polar residues). The helical transmembrane segment at 48 to 68 (AAWLLVIALIITWSAVAVVMF) threads the bilayer. The Lumenal segment spans residues 69 to 706 (DLVDYKNFSA…GKPNSPGPKQ (638 aa)). Residue N75 is glycosylated (N-linked (GlcNAc...) asparagine). A compositionally biased stretch (acidic residues) spans 117 to 127 (DGDEEDDEGDE). 3 disordered regions span residues 117–265 (DGDE…EQKD), 281–663 (DLKP…KKQK), and 684–706 (FPVT…GPKQ). Basic and acidic residues-rich tracts occupy residues 128–254 (DTAK…ESKE), 309–358 (PEEK…KSPD), 372–432 (TKKD…KEEV), 443–518 (AKKE…EVKP), 525–552 (IKKE…EKVL), 570–588 (KKAE…DKPK), and 599–621 (ESGK…RESH). N625 carries N-linked (GlcNAc...) asparagine glycosylation. Basic and acidic residues predominate over residues 628 to 651 (KAEKPARGSKEGFEDVPASKKAKE).

In terms of assembly, interacts with CASQ2. Homooligomer of variable subunit number; disulfide-linked. Interacts with CASQ1 and RYR1 in skeletal muscle. Phosphorylated by CaMK2. In terms of processing, N-glycosylated. In terms of tissue distribution, detected in skeletal muscle and in heart (at protein level). Detected in skeletal muscle and in heart.

It localises to the sarcoplasmic reticulum membrane. Its function is as follows. Contributes to the regulation of lumenal Ca2+ release via the sarcoplasmic reticulum calcium release channels RYR1 and RYR2, a key step in triggering skeletal and heart muscle contraction. Required for normal organization of the triad junction, where T-tubules and the sarcoplasmic reticulum terminal cisternae are in close contact. Required for normal skeletal muscle strength. Plays a role in excitation-contraction coupling in the heart and in regulating the rate of heart beats. In Oryctolagus cuniculus (Rabbit), this protein is Triadin (TRDN).